Consider the following 237-residue polypeptide: BTB/POZ domain-containing protein KCTD6 (237 aa).

Residues 1-104 form an interaction with ANK1 isoform Mu17 region; it reads MDNGDWGYMM…FYQIEPLIQC (104 aa). Residues 10-110 are interaction with CUL3; that stretch reads MTDPVTLNVG…LIQCLNDPKP (101 aa). The region spanning 12-81 is the BTB domain; the sequence is DPVTLNVGGH…LRTSELTLPL (70 aa). The tract at residues 113 to 187 is interaction with USP21; the sequence is PMDTFEEVVE…TFGPCDYHQE (75 aa).

In terms of assembly, homopentamer. Interacts with KCTD11; KCTD6 and KCTD11 may associate in pentameric assemblies. Interacts (via BTB domain) with CUL3; initially a 4:4 stoichiometry has been reported, however, electron microscopy revealed pentameric states with a five-pointed pinwheel shape. The interaction with CUL3 is indicative for a participation in a BCR (BTB-CUL3-RBX1) E3 ubiquitin-protein ligase complex. Interacts with HDAC1; probably indirect as the interaction is requires the presence of KCTD11. Interacts with USP21 (preferentially catalytic inactive form). Interacts with ANK1 isoform Mu17; detected in striated muscle. Interacts with USP11. Highly expressed in cerebellum and brain. Expression is down-regulated in medulloblastoma.

It localises to the cytoplasm. It is found in the myofibril. The protein resides in the sarcomere. Its subcellular location is the m line. Its pathway is protein modification; protein ubiquitination. Its function is as follows. Probable substrate-specific adapter of a BCR (BTB-CUL3-RBX1) E3 ubiquitin-protein ligase complex mediating the ubiquitination and subsequent proteasomal degradation of target proteins. Promotes the ubiquitination of HDAC1; the function seems to depend on KCTD11:KCTD6 oligomerization. Can function as antagonist of the Hedgehog pathway by affecting the nuclear transfer of transcription factor GLI1; the function probably occurs via HDAC1 down-regulation, keeping GLI1 acetylated and inactive. Inhibits cell growth and tumorigenicity of medulloblastoma (MDB). Involved in regulating protein levels of ANK1 isoform Mu17 probably implicating CUL3-dependent proteasomal degradation. The protein is BTB/POZ domain-containing protein KCTD6 (KCTD6) of Homo sapiens (Human).